A 171-amino-acid chain; its full sequence is S-ribosylhomocysteine lyase (171 aa).

Residues His-54, His-58, and Cys-128 each contribute to the Fe cation site.

It belongs to the LuxS family. In terms of assembly, homodimer. Requires Fe cation as cofactor.

The catalysed reaction is S-(5-deoxy-D-ribos-5-yl)-L-homocysteine = (S)-4,5-dihydroxypentane-2,3-dione + L-homocysteine. Its function is as follows. Involved in the synthesis of autoinducer 2 (AI-2) which is secreted by bacteria and is used to communicate both the cell density and the metabolic potential of the environment. The regulation of gene expression in response to changes in cell density is called quorum sensing. Catalyzes the transformation of S-ribosylhomocysteine (RHC) to homocysteine (HC) and 4,5-dihydroxy-2,3-pentadione (DPD). This Proteus mirabilis (strain HI4320) protein is S-ribosylhomocysteine lyase.